The sequence spans 511 residues: Maturase K (511 aa).

The protein belongs to the intron maturase 2 family. MatK subfamily.

It is found in the plastid. Its subcellular location is the chloroplast. Functionally, usually encoded in the trnK tRNA gene intron. Probably assists in splicing its own and other chloroplast group II introns. The protein is Maturase K of Brachypodium distachyon (Purple false brome).